A 262-amino-acid polypeptide reads, in one-letter code: Insulin-like growth factor-binding protein 1 (262 aa).

The N-terminal stretch at 1 to 25 (MPEVPAVRAWPLLLSLALQLGAAAG) is a signal peptide. The region spanning 28 to 108 (QPLHCAPCSA…TRGQGACMPA (81 aa)) is the IGFBP N-terminal domain. 6 cysteine pairs are disulfide-bonded: Cys32/Cys59, Cys35/Cys61, Cys43/Cys62, Cys50/Cys65, Cys72/Cys85, and Cys79/Cys105. The interval 101 to 133 (GQGACMPAPSAEATETKDPAAPETTSPESTEMT) is disordered. Positions 121–131 (APETTSPESTE) are enriched in low complexity. Phosphoserine is present on residues Ser126, Ser129, and Ser147. Tyr161 is modified (phosphotyrosine). Residues 176–254 (KEPCQRELYK…STAVRGDPKC (79 aa)) form the Thyroglobulin type-1 domain. Disulfide bonds link Cys179-Cys209, Cys220-Cys231, and Cys233-Cys254. Position 245 is a phosphoserine (Ser245). The Cell attachment site motif lies at 249-251 (RGD).

As to quaternary structure, binds equally well IGF1 and IGF2. Interacts with integrin ITGA5:ITGB1. Interacts with VHL; this interaction inhibits HIF1A degradation.

Its subcellular location is the secreted. In terms of biological role, multifunctional protein that plays a critical role in regulating the availability of IGFs such as IGF1 and IGF2 to their receptors and thereby regulates IGF-mediated cellular processes including cell migration, proliferation, differentiation or apoptosis in a cell-type specific manner. Also plays a positive role in cell migration by interacting with integrin ITGA5:ITGB1 through its RGD motif. Mechanistically, binding to integrins leads to activation of focal adhesion kinase/PTK2 and stimulation of the mitogen-activated protein kinase (MAPK) pathway. Regulates cardiomyocyte apoptosis by suppressing HIF-1alpha/HIF1A degradation through ubiquitination. This Sus scrofa (Pig) protein is Insulin-like growth factor-binding protein 1 (IGFBP1).